The following is a 965-amino-acid chain: Kinesin-like protein KIN-7K, chloroplastic (965 aa).

The interval 1–69 (MASRQGSKSR…PQTAQRSKEN (69 aa)) is disordered. The segment covering 19 to 28 (STASSTTSSS) has biased composition (low complexity). The segment covering 29–38 (KLYQETSIDG) has biased composition (polar residues). The segment covering 40-56 (SSPASSSAQSKQQFFSP) has biased composition (low complexity). One can recognise a Kinesin motor domain in the interval 69–388 (NVTVTVRFRP…LKFAHRAKHI (320 aa)). Residue 149-156 (GVTSSGKT) participates in ATP binding. Positions 389-483 (EIQAEQNKII…LTKLILVSTK (95 aa)) form a coiled coil. Over residues 551–561 (LLNWLKPKKRD) the composition is skewed to basic residues. Disordered regions lie at residues 551 to 633 (LLNW…KMSD) and 842 to 888 (ATQK…ELRM). A compositionally biased stretch (low complexity) spans 564-577 (SSASDQSSVVKSNS). The span at 606-623 (SEPREDREALEDSSHEME) shows a compositional bias: basic and acidic residues. Coiled-coil stretches lie at residues 628-703 (SNKM…FVMT) and 738-846 (NRII…TQKS). Low complexity predominate over residues 851–862 (RNKTGTTTNVRN). Residues 864–888 (GRRESLAKRQEHDSPSMELKRELRM) are compositionally biased toward basic and acidic residues. Positions 896–931 (YEAALGEKEQREAELERILEETKQREAYLENELANM) form a coiled coil. The tract at residues 942–965 (QGADSEISDSISETRQTEQTEGSF) is disordered. Residues 949 to 965 (SDSISETRQTEQTEGSF) show a composition bias toward polar residues.

The protein belongs to the TRAFAC class myosin-kinesin ATPase superfamily. Kinesin family. KIN-7 subfamily.

Its subcellular location is the plastid. It localises to the chloroplast. This chain is Kinesin-like protein KIN-7K, chloroplastic, found in Arabidopsis thaliana (Mouse-ear cress).